Consider the following 339-residue polypeptide: Deubiquitinase and deneddylase Dub2 (339 aa).

The helical transmembrane segment at 36 to 56 (IIIALFLIVISCGLILCAYTF) threads the bilayer. Residues H203, D220, and C282 contribute to the active site.

The protein belongs to the peptidase C48 family.

The protein localises to the secreted. It is found in the host cell. It localises to the membrane. Effector proteins function to alter host cell physiology and promote bacterial survival in host tissues. This protease possesses deubiquitinating and deneddylating activities. In Chlamydia trachomatis serovar L2 (strain ATCC VR-902B / DSM 19102 / 434/Bu), this protein is Deubiquitinase and deneddylase Dub2 (cdu2).